A 181-amino-acid chain; its full sequence is Oligoribonuclease (181 aa).

Positions 8–171 (LIWLDLEMTG…DDIKESIAEL (164 aa)) constitute an Exonuclease domain. Y129 is a catalytic residue.

It belongs to the oligoribonuclease family.

The protein localises to the cytoplasm. Its function is as follows. 3'-to-5' exoribonuclease specific for small oligoribonucleotides. In Colwellia psychrerythraea (strain 34H / ATCC BAA-681) (Vibrio psychroerythus), this protein is Oligoribonuclease.